Here is a 118-residue protein sequence, read N- to C-terminus: Beta-2-microglobulin (118 aa).

Positions 1–20 (MARFVALVLLGLLSLSGLDA) are cleaved as a signal peptide. Residues 25 to 112 (PKIQVYSRHP…HVTLEQPRIV (88 aa)) form the Ig-like C1-type domain. The cysteines at positions 45 and 99 are disulfide-linked.

The protein belongs to the beta-2-microglobulin family. As to quaternary structure, heterodimer of an alpha chain and a beta chain. Beta-2-microglobulin is the beta-chain of major histocompatibility complex class I molecules. Forms a heterotrimer with MR1 and a metabolite antigen.

The protein localises to the secreted. Functionally, component of the class I major histocompatibility complex (MHC). Involved in the presentation of peptide antigens to the immune system. The chain is Beta-2-microglobulin (B2M) from Bos taurus (Bovine).